The chain runs to 402 residues: MQATKIIDGFHLVGAIDWNSRDFHGYTLSPMGTTYNAYLVEDEKTTLFDTVKAEYKGELLCGIASVIDPKKIDYLVIQHLELDHAGALPALIEACQPEKIFTSSLGQKAMESHFHYKDWPVQVVKHGETLSLGKRTVTFYETRMLHWPDSMVSWFADEKVLISNDIFGQNIAASERFSDQIPVHTLERAMREYYANIVNPYAPQTLKAIETLVGAGVAPEFICPDHGVIFRGADQCTFAVQKYVEYAEQKPTNKVVIFYDSMWHSTEKMARVLAESFRDEGCTVKLMWCKACHHSQIMSEISDAGAVIVGSPTHNNGILPYVAGTLQYIKGLRPQNKIGGAFGSFGWSGESTKVLAEWLTGMGFDMPATPVKVKNVPTHADYEQLKTMAQTIARALKAKLAA.

Positions 30-216 (PMGTTYNAYL…KAIETLVGAG (187 aa)) are zinc metallo-hydrolase. Residues His79, Glu81, Asp83, His146, Asp165, and His226 each contribute to the Fe cation site. Residues 255–393 (VVIFYDSMWH…QLKTMAQTIA (139 aa)) enclose the Flavodoxin-like domain.

This sequence in the N-terminal section; belongs to the zinc metallo-hydrolase group 3 family. Homodimer. Requires FMN as cofactor. Fe cation serves as cofactor.

It functions in the pathway energy metabolism; electron transfer. Catalyzes the four-electron reduction of one oxygen molecule to two water molecules. The chain is Rubredoxin-oxygen oxidoreductase (roo) from Megalodesulfovibrio gigas (strain ATCC 19364 / DSM 1382 / NCIMB 9332 / VKM B-1759) (Desulfovibrio gigas).